A 326-amino-acid chain; its full sequence is Mitochondrial glycine transporter (326 aa).

Solcar repeat units lie at residues His45–Tyr134, Pro141–Ala225, and Leu237–Arg321. The next 6 helical transmembrane spans lie at Phe51–Gln76, Gly109–Phe135, Val147–Glu172, Gly200–Arg223, Ile241–Met267, and Gly296–Val314.

Belongs to the mitochondrial carrier (TC 2.A.29) family. SLC25A38 subfamily.

It is found in the mitochondrion inner membrane. It catalyses the reaction glycine(in) = glycine(out). Functionally, mitochondrial glycine transporter that imports glycine into the mitochondrial matrix. Plays an important role in providing glycine for the first enzymatic step in heme biosynthesis, the condensation of glycine with succinyl-CoA to produce 5-aminolevulinate (ALA) in the mitochondrial matrix. Required during erythropoiesis. In terms of biological role, plays a role as pro-apoptotic protein that induces caspase-dependent apoptosis. This Mus musculus (Mouse) protein is Mitochondrial glycine transporter.